Consider the following 191-residue polypeptide: MAGAAEDARALFRAGVCAALEAWPALQIAVENGFGGVHSQEKAKWLGGAVEDYFMRNADLELDEVEDFLGELLTNEFDTVVEDGSLPQVSQQLQTMFHHFQRGDGAALREMASCITQRKCKVTATALKTARETDEDEDDVDSVEEMEVTATNDGAATDGVCPQPEPSDPDAQTIKEEDIVEDGWTIVRRKK.

The tract at residues T149–Q172 is disordered.

Belongs to the TSR2 family.

May be involved in 20S pre-rRNA processing. This Homo sapiens (Human) protein is Pre-rRNA-processing protein TSR2 homolog (TSR2).